Consider the following 162-residue polypeptide: Transcription antitermination protein RfaH (162 aa).

The protein belongs to the RfaH family. Interacts with both the nontemplate DNA and the RNA polymerase (RNAP). Monomer in solution.

Its function is as follows. Enhances distal genes transcription elongation in a specialized subset of operons that encode extracytoplasmic components. RfaH is recruited into a multi-component RNA polymerase complex by the ops element, which is a short conserved DNA sequence located downstream of the main promoter of these operons. Once bound, RfaH suppresses pausing and inhibits Rho-dependent and intrinsic termination at a subset of sites. Termination signals are bypassed, which allows complete synthesis of long RNA chains. Enhances expression of several operons involved in synthesis of lipopolysaccharides, exopolysaccharides, hemolysin, and sex factor. Also negatively controls expression and surface presentation of AG43 and possibly another AG43-independent factor that mediates cell-cell interactions and biofilm formation. This is Transcription antitermination protein RfaH from Escherichia coli (strain K12).